Reading from the N-terminus, the 975-residue chain is Protein bicaudal D homolog 1 (975 aa).

Coiled-coil stretches lie at residues 1–265 (MAAE…HISI) and 319–496 (SELN…IANE). Disordered stretches follow at residues 383-403 (SSKELKAELDGEKGRDSGEEA), 545-616 (RSGS…LDTS), 800-824 (DHEQSRRSKGKLGKSKIGSPKVSGE), 836-877 (LLHS…ASYL), and 922-975 (DCQQ…PPHP). Composition is skewed to basic and acidic residues over residues 385–403 (KELKAELDGEKGRDSGEEA) and 581–590 (VAKESTEASK). The segment covering 592-602 (PSPTKTPTISP) has biased composition (polar residues). A coiled-coil region spans residues 663 to 803 (IDKDKEALME…LEDLEFDHEQ (141 aa)). The interval 663–803 (IDKDKEALME…LEDLEFDHEQ (141 aa)) is interaction with RAB6A. Over residues 840 to 877 (QGPQTPNIRVSSGTQRKRQFSPSLCDQSRPRTSGASYL) the composition is skewed to polar residues.

It belongs to the BicD family. As to quaternary structure, interacts with RAB6A. Interacts (via C-terminus) with RAB6B (GTP-bound); the interaction is direct. Interacts with CLIP-115 and KIFC2. In terms of assembly, (Microbial infection) Interacts with human cytomegalovirus/HHV-5 protein UL32. Expressed in the brain, heart and skeletal muscle.

Its subcellular location is the golgi apparatus. Regulates coat complex coatomer protein I (COPI)-independent Golgi-endoplasmic reticulum transport by recruiting the dynein-dynactin motor complex. This chain is Protein bicaudal D homolog 1 (BICD1), found in Homo sapiens (Human).